The primary structure comprises 360 residues: Dynein intermediate light chain dil1 (360 aa).

The protein belongs to the dynein light intermediate chain DYN3 family. In terms of assembly, the dynein complex consists of at least two heavy chains and a number of intermediate and light chains. Interacts with rga3, sec10, sec16, syp1, rvb2, spbc19c7.04c, spbc2f12.05 and spac3a11.10c. In terms of processing, the N-terminal part is acetylated.

Its subcellular location is the cytoplasm. It is found in the cytoskeleton. In terms of biological role, component of the cytoplasmic dynein which acts as a motor for the intracellular retrograde motility of vesicles and organelles along microtubules. Promotes oscillatory nuclear movement and efficient pairing of homologous centromeres during meiotic prophase. In Schizosaccharomyces pombe (strain 972 / ATCC 24843) (Fission yeast), this protein is Dynein intermediate light chain dil1 (dil1).